We begin with the raw amino-acid sequence, 191 residues long: Phosphoheptose isomerase (191 aa).

One can recognise an SIS domain in the interval 37–191; the sequence is ITSSLKQGGK…LILLIEQSLL (155 aa). 52-54 contacts substrate; that stretch reads NGG. His-61 and Glu-65 together coordinate Zn(2+). Substrate-binding positions include Glu-65, 93–94, 119–121, Ser-124, and Gln-172; these read ND and STS. Zn(2+)-binding residues include Gln-172 and His-180.

Belongs to the SIS family. GmhA subfamily. Zn(2+) serves as cofactor.

The protein resides in the cytoplasm. It catalyses the reaction 2 D-sedoheptulose 7-phosphate = D-glycero-alpha-D-manno-heptose 7-phosphate + D-glycero-beta-D-manno-heptose 7-phosphate. The protein operates within carbohydrate biosynthesis; D-glycero-D-manno-heptose 7-phosphate biosynthesis; D-glycero-alpha-D-manno-heptose 7-phosphate and D-glycero-beta-D-manno-heptose 7-phosphate from sedoheptulose 7-phosphate: step 1/1. In terms of biological role, catalyzes the isomerization of sedoheptulose 7-phosphate in D-glycero-D-manno-heptose 7-phosphate. This Cytophaga hutchinsonii (strain ATCC 33406 / DSM 1761 / CIP 103989 / NBRC 15051 / NCIMB 9469 / D465) protein is Phosphoheptose isomerase.